Reading from the N-terminus, the 383-residue chain is WD repeat-containing protein 55 (383 aa).

The span at 1–11 (MDRTCEERPAE) shows a compositional bias: basic and acidic residues. A disordered region spans residues 1–33 (MDRTCEERPAEDGSDEEDPDSMEAPTRIRDTPE). The span at 12 to 21 (DGSDEEDPDS) shows a compositional bias: acidic residues. Ser-14 bears the Phosphoserine mark. 7 WD repeats span residues 36-75 (VLEA…GETK), 82-121 (HHLK…LERR), 125-163 (AHGA…PLMD), 166-205 (QHEE…FELL), 208-247 (PQSG…ATSD), 250-289 (ALRA…VVGS), and 293-332 (HTGE…AVVV). Ser-354 carries the phosphoserine modification. The segment at 363 to 383 (REEGEDSMAQEEKEETGDDSD) is disordered. Residues 365 to 383 (EGEDSMAQEEKEETGDDSD) are compositionally biased toward acidic residues. Phosphothreonine is present on Thr-378. Phosphoserine is present on Ser-382.

This sequence belongs to the WD repeat WDR55 family.

Its subcellular location is the nucleus. It localises to the nucleolus. The protein localises to the cytoplasm. Its function is as follows. Nucleolar protein that acts as a modulator of rRNA synthesis. Plays a central role during organogenesis. The protein is WD repeat-containing protein 55 (WDR55) of Homo sapiens (Human).